The sequence spans 163 residues: Probable cobalt-precorrin-6B C(15)-methyltransferase (decarboxylating) (163 aa).

S-adenosyl-L-methionine-binding positions include T6, 30–34 (GCGSG), D51, and G75.

It belongs to the methyltransferase superfamily. Archaeal-type CbiT family.

The enzyme catalyses Co-precorrin-6B + S-adenosyl-L-methionine = Co-precorrin-7 + S-adenosyl-L-homocysteine + CO2. The protein operates within cofactor biosynthesis; adenosylcobalamin biosynthesis; cob(II)yrinate a,c-diamide from sirohydrochlorin (anaerobic route): step 8/10. Functionally, catalyzes the methylation of C-15 in cobalt-precorrin-6B followed by the decarboxylation of C-12 to form cobalt-precorrin-7. The protein is Probable cobalt-precorrin-6B C(15)-methyltransferase (decarboxylating) of Archaeoglobus fulgidus (strain ATCC 49558 / DSM 4304 / JCM 9628 / NBRC 100126 / VC-16).